The primary structure comprises 846 residues: Translation initiation factor IF-2 (846 aa).

The interval 94–263 (QRSPEEIQAE…HGFQNPTGPV (170 aa)) is disordered. A compositionally biased stretch (basic and acidic residues) spans 96 to 135 (SPEEIQAEQKRELDERRAAENAARDKVEAEVRQRNEEQAR). 2 stretches are compositionally biased toward low complexity: residues 136-148 (RQAAGSAAAAPAP) and 158-176 (AAPVAAPAPVVADAPASED). Basic and acidic residues-rich tracts occupy residues 177 to 206 (AAARAAERKKDETRRNESRTRDDDRRRGEA) and 230 to 239 (TTDEESDGAR). The span at 240–253 (RGRGGKSKLKKRNQ) shows a compositional bias: basic residues. The 168-residue stretch at 346-513 (SRAPVVTVMG…AVLLQAEILE (168 aa)) folds into the tr-type G domain. The G1 stretch occupies residues 355-362 (GHVDHGKT). 355–362 (GHVDHGKT) serves as a coordination point for GTP. Residues 380–384 (GITQH) are G2. Residues 401–404 (DTPG) form a G3 region. GTP is bound by residues 401 to 405 (DTPGH) and 455 to 458 (NKID). A G4 region spans residues 455 to 458 (NKID). The interval 491–493 (SAK) is G5.

It belongs to the TRAFAC class translation factor GTPase superfamily. Classic translation factor GTPase family. IF-2 subfamily.

It is found in the cytoplasm. Its function is as follows. One of the essential components for the initiation of protein synthesis. Protects formylmethionyl-tRNA from spontaneous hydrolysis and promotes its binding to the 30S ribosomal subunits. Also involved in the hydrolysis of GTP during the formation of the 70S ribosomal complex. The chain is Translation initiation factor IF-2 from Pseudomonas putida (strain ATCC 47054 / DSM 6125 / CFBP 8728 / NCIMB 11950 / KT2440).